A 280-amino-acid polypeptide reads, in one-letter code: L-proline cis-4-hydroxylase (280 aa).

The Fe cation site is built by histidine 106, aspartate 108, and histidine 154. Residue arginine 164 coordinates 2-oxoglutarate.

It belongs to the L-proline cis-4-/cis-3-hydroxylase family. Fe(2+) serves as cofactor.

The catalysed reaction is L-proline + 2-oxoglutarate + O2 = cis-4-hydroxy-L-proline + succinate + CO2. Inhibited by metal ions such as Co(2+), Zn(2+), Cu(2+) or Ni(2+). Is also inhibited by EDTA or diethylpyrocarbonate (DEPC) in vitro. Unlike the procollagen-proline cis-3- and trans-4-hydroxylases from mammals, does not necessarily require L-ascorbate for activity although it does increase the activity of the enzyme. Dioxygenase that catalyzes the 2-oxoglutarate-dependent selective hydroxylation of free L-proline to cis-4-hydroxy-L-proline (cis-4-Hyp). The chain is L-proline cis-4-hydroxylase from Rhizobium meliloti (strain 1021) (Ensifer meliloti).